The sequence spans 201 residues: Dephospho-CoA kinase (201 aa).

A DPCK domain is found at 4–201; it reads TIGLTGGIAS…ILKQWDALEK (198 aa). 12–17 lines the ATP pocket; that stretch reads ASGKST.

It belongs to the CoaE family.

Its subcellular location is the cytoplasm. It catalyses the reaction 3'-dephospho-CoA + ATP = ADP + CoA + H(+). It functions in the pathway cofactor biosynthesis; coenzyme A biosynthesis; CoA from (R)-pantothenate: step 5/5. Catalyzes the phosphorylation of the 3'-hydroxyl group of dephosphocoenzyme A to form coenzyme A. The protein is Dephospho-CoA kinase of Geobacillus kaustophilus (strain HTA426).